A 275-amino-acid chain; its full sequence is Ribosomal RNA small subunit methyltransferase A (275 aa).

S-adenosyl-L-methionine contacts are provided by N28, L30, G55, E77, D103, and N123.

It belongs to the class I-like SAM-binding methyltransferase superfamily. rRNA adenine N(6)-methyltransferase family. RsmA subfamily.

The protein localises to the cytoplasm. The catalysed reaction is adenosine(1518)/adenosine(1519) in 16S rRNA + 4 S-adenosyl-L-methionine = N(6)-dimethyladenosine(1518)/N(6)-dimethyladenosine(1519) in 16S rRNA + 4 S-adenosyl-L-homocysteine + 4 H(+). Functionally, specifically dimethylates two adjacent adenosines (A1518 and A1519) in the loop of a conserved hairpin near the 3'-end of 16S rRNA in the 30S particle. May play a critical role in biogenesis of 30S subunits. The sequence is that of Ribosomal RNA small subunit methyltransferase A from Rhizobium etli (strain ATCC 51251 / DSM 11541 / JCM 21823 / NBRC 15573 / CFN 42).